We begin with the raw amino-acid sequence, 463 residues long: 23S rRNA (uracil(1939)-C(5))-methyltransferase RlmD (463 aa).

In terms of domain architecture, TRAM spans 14–78 (AVAPGSDPVV…PSYEQAHLLE (65 aa)). Residues cysteine 91, cysteine 97, cysteine 100, and cysteine 179 each coordinate [4Fe-4S] cluster. S-adenosyl-L-methionine-binding residues include glutamine 287, phenylalanine 316, asparagine 321, glutamate 337, asparagine 365, and aspartate 386. Cysteine 419 serves as the catalytic Nucleophile.

This sequence belongs to the class I-like SAM-binding methyltransferase superfamily. RNA M5U methyltransferase family. RlmD subfamily.

It catalyses the reaction uridine(1939) in 23S rRNA + S-adenosyl-L-methionine = 5-methyluridine(1939) in 23S rRNA + S-adenosyl-L-homocysteine + H(+). In terms of biological role, catalyzes the formation of 5-methyl-uridine at position 1939 (m5U1939) in 23S rRNA. The protein is 23S rRNA (uracil(1939)-C(5))-methyltransferase RlmD of Cupriavidus pinatubonensis (strain JMP 134 / LMG 1197) (Cupriavidus necator (strain JMP 134)).